The primary structure comprises 273 residues: Putative phosphoenolpyruvate synthase regulatory protein (273 aa).

ADP is bound at residue 153–160 (AVSRAGKT).

It belongs to the pyruvate, phosphate/water dikinase regulatory protein family. PSRP subfamily.

It catalyses the reaction [pyruvate, water dikinase] + ADP = [pyruvate, water dikinase]-phosphate + AMP + H(+). The catalysed reaction is [pyruvate, water dikinase]-phosphate + phosphate + H(+) = [pyruvate, water dikinase] + diphosphate. Functionally, bifunctional serine/threonine kinase and phosphorylase involved in the regulation of the phosphoenolpyruvate synthase (PEPS) by catalyzing its phosphorylation/dephosphorylation. This is Putative phosphoenolpyruvate synthase regulatory protein from Xanthomonas axonopodis pv. citri (strain 306).